We begin with the raw amino-acid sequence, 112 residues long: Histone H2A, sperm (112 aa).

The residue at position 91 (Q91) is an N5-methylglutamine. A Glycyl lysine isopeptide (Lys-Gly) (interchain with G-Cter in ubiquitin) cross-link involves residue K106.

The protein belongs to the histone H2A family. In terms of assembly, the nucleosome is a histone octamer containing two molecules each of H2A, H2B, H3 and H4 assembled in one H3-H4 heterotetramer and two H2A-H2B heterodimers. The octamer wraps approximately 147 bp of DNA. In terms of processing, monoubiquitination gives a specific tag for epigenetic transcriptional repression.

The protein localises to the nucleus. The protein resides in the chromosome. In terms of biological role, core component of nucleosome. Nucleosomes wrap and compact DNA into chromatin, limiting DNA accessibility to the cellular machineries which require DNA as a template. Histones thereby play a central role in transcription regulation, DNA repair, DNA replication and chromosomal stability. DNA accessibility is regulated via a complex set of post-translational modifications of histones, also called histone code, and nucleosome remodeling. This chain is Histone H2A, sperm, found in Lytechinus pictus (Painted sea urchin).